The sequence spans 137 residues: Small ribosomal subunit protein uS11 (137 aa).

The tract at residues 1-25 (MADRRRGAARGGAARPRRRERKNIP) is disordered. Residues 15–25 (RPRRRERKNIP) are compositionally biased toward basic residues.

It belongs to the universal ribosomal protein uS11 family. As to quaternary structure, part of the 30S ribosomal subunit. Interacts with proteins S7 and S18. Binds to IF-3.

In terms of biological role, located on the platform of the 30S subunit, it bridges several disparate RNA helices of the 16S rRNA. Forms part of the Shine-Dalgarno cleft in the 70S ribosome. In Thermomicrobium roseum (strain ATCC 27502 / DSM 5159 / P-2), this protein is Small ribosomal subunit protein uS11.